Consider the following 581-residue polypeptide: Proline--tRNA ligase (581 aa).

This sequence belongs to the class-II aminoacyl-tRNA synthetase family. ProS type 1 subfamily. In terms of assembly, homodimer.

The protein localises to the cytoplasm. The enzyme catalyses tRNA(Pro) + L-proline + ATP = L-prolyl-tRNA(Pro) + AMP + diphosphate. Catalyzes the attachment of proline to tRNA(Pro) in a two-step reaction: proline is first activated by ATP to form Pro-AMP and then transferred to the acceptor end of tRNA(Pro). As ProRS can inadvertently accommodate and process non-cognate amino acids such as alanine and cysteine, to avoid such errors it has two additional distinct editing activities against alanine. One activity is designated as 'pretransfer' editing and involves the tRNA(Pro)-independent hydrolysis of activated Ala-AMP. The other activity is designated 'posttransfer' editing and involves deacylation of mischarged Ala-tRNA(Pro). The misacylated Cys-tRNA(Pro) is not edited by ProRS. In Blochmanniella pennsylvanica (strain BPEN), this protein is Proline--tRNA ligase.